The sequence spans 158 residues: Ribosome maturation factor RimP (158 aa).

Belongs to the RimP family.

Its subcellular location is the cytoplasm. Required for maturation of 30S ribosomal subunits. In Leuconostoc mesenteroides subsp. mesenteroides (strain ATCC 8293 / DSM 20343 / BCRC 11652 / CCM 1803 / JCM 6124 / NCDO 523 / NBRC 100496 / NCIMB 8023 / NCTC 12954 / NRRL B-1118 / 37Y), this protein is Ribosome maturation factor RimP.